The primary structure comprises 193 residues: Probable molybdenum cofactor guanylyltransferase (193 aa).

GTP is bound by residues 9 to 11 (TAG), K21, D64, and D93. Residue D93 coordinates Mg(2+).

This sequence belongs to the MobA family. It depends on Mg(2+) as a cofactor.

It is found in the cytoplasm. The catalysed reaction is Mo-molybdopterin + GTP + H(+) = Mo-molybdopterin guanine dinucleotide + diphosphate. Its function is as follows. Transfers a GMP moiety from GTP to Mo-molybdopterin (Mo-MPT) cofactor (Moco or molybdenum cofactor) to form Mo-molybdopterin guanine dinucleotide (Mo-MGD) cofactor. The protein is Probable molybdenum cofactor guanylyltransferase of Deinococcus radiodurans (strain ATCC 13939 / DSM 20539 / JCM 16871 / CCUG 27074 / LMG 4051 / NBRC 15346 / NCIMB 9279 / VKM B-1422 / R1).